A 515-amino-acid chain; its full sequence is N-fatty-acyl-amino acid synthase/hydrolase PM20D1.1 (515 aa).

The first 34 residues, 1–34, serve as a signal peptide directing secretion; it reads MKTKFTKKTVLKFFGILFAILLLSVLILFSVVIG. Residues N50, N87, and N118 are each glycosylated (N-linked (GlcNAc...) asparagine). H140 contacts Zn(2+). The active site involves D142. Position 173 (D173) interacts with Zn(2+). Catalysis depends on E207, which acts as the Proton acceptor. The Zn(2+) site is built by E208, D234, and H480.

It belongs to the peptidase M20A family. Zn(2+) is required as a cofactor.

It localises to the secreted. It carries out the reaction an N-acyl-L-amino acid + H2O = an L-alpha-amino acid + a carboxylate. The catalysed reaction is an N-acyl-aromatic L-alpha-amino acid + H2O = an aromatic L-alpha-amino acid + a carboxylate. The enzyme catalyses N-(5Z,8Z,11Z,14Z)-eicosatetraenoyl-glycine + H2O = (5Z,8Z,11Z,14Z)-eicosatetraenoate + glycine. It catalyses the reaction N-hexadecanoyl-L-phenylalanine + H2O = hexadecanoate + L-phenylalanine. It carries out the reaction N-octadecanoyl-L-phenylalanine + H2O = octadecanoate + L-phenylalanine. The catalysed reaction is N-(4Z,7Z,10Z,13Z,16Z,19Z-docosahexaenoyl)-L-phenylalanine + H2O = (4Z,7Z,10Z,13Z,16Z,19Z)-docosahexaenoate + L-phenylalanine. The enzyme catalyses N-(9Z-octadecenoyl)-L-asparagine + H2O = L-asparagine + (9Z)-octadecenoate. It catalyses the reaction (9Z)-octadecenoate + glycine = N-(9Z-octadecenoyl)glycine + H2O. It carries out the reaction N-(9Z-octadecenoyl)-L-lysine + H2O = L-lysine + (9Z)-octadecenoate. The catalysed reaction is N-(9Z-octadecenoyl)-L-methionine + H2O = (9Z)-octadecenoate + L-methionine. The enzyme catalyses N-(9Z-octadecenoyl)-L-serine + H2O = L-serine + (9Z)-octadecenoate. It catalyses the reaction N-(9Z-octadecenoyl)-L-tryptophan + H2O = L-tryptophan + (9Z)-octadecenoate. It carries out the reaction N-(9Z-octadecenoyl)-L-tyrosine + H2O = L-tyrosine + (9Z)-octadecenoate. The catalysed reaction is N-(9Z-octadecenoyl)-L-glutamine + H2O = L-glutamine + (9Z)-octadecenoate. The enzyme catalyses N-(5Z,8Z,11Z,14Z-eicosatetraenoyl)-L-serine + H2O = (5Z,8Z,11Z,14Z)-eicosatetraenoate + L-serine. It catalyses the reaction (5Z,8Z,11Z,14Z)-eicosatetraenoate + L-phenylalanine = N-(5Z,8Z,11Z,14Z-eicosatetraenoyl)-L-phenylalanine + H2O. It carries out the reaction N-(9Z-octadecenoyl)-L-leucine + H2O = L-leucine + (9Z)-octadecenoate. The catalysed reaction is L-phenylalanine + (9Z)-octadecenoate = N-(9Z-octadecenoyl)-L-phenylalanine + H2O. It participates in amino-acid metabolism. The protein operates within energy metabolism; electron transfer. It functions in the pathway lipid metabolism; fatty acid metabolism. Its activity is regulated as follows. Lipoproteins are powerful coactivators of PM20D1 activity in vitro and NAA biosynthesis in vivo. Functionally, secreted enzyme that regulates the endogenous N-fatty acyl amino acid (NAAs) tissue and circulating levels by functioning as a bidirectional NAA synthase/hydrolase. It condenses free fatty acids and free amino acids to generate NAAs and bidirectionally catalyzes the reverse hydrolysis reaction. Some of these NAAs stimulate oxidative metabolism via mitochondrial uncoupling, increasing energy expenditure in a UPC1-independent manner. Thereby, this secreted protein may indirectly regulate whole body energy expenditure. PM20D1 circulates in tight association with both low- and high-density (LDL and HDL,respectively) lipoprotein particles. This is N-fatty-acyl-amino acid synthase/hydrolase PM20D1.1 from Danio rerio (Zebrafish).